Consider the following 217-residue polypeptide: Protein MODIFYING WALL LIGNIN-2 (217 aa).

The signal sequence occupies residues 1–23 (MHNLFLYSVVFSLGLVSFITCFA). The Cytoplasmic portion of the chain corresponds to 24 to 51 (AEFKRTQKEDIRWDTERNCYVPGSHAFG). Residues 52-72 (LGSAAVLCFCLAQIVGNIVVF) traverse the membrane as a helical segment. Residues 73–94 (RNHRTRTKREDGYKITDLTLPT) are Extracellular-facing. The chain crosses the membrane as a helical span at residues 95–115 (VLLLLSWSNFVVVVLILSTAI). At 116–137 (SMSRAQAYGEGWLDEDCYLVKD) the chain is on the cytoplasmic side. Residues 138 to 158 (GVFAASGCLAILGLGALTISA) form a helical membrane-spanning segment. At 159–217 (TRIKVKKQQQLVQVVIKDQNQDQRRSMEEEQKHDEHQTNKSESVIHLVEEVSSTNISRI) the chain is on the extracellular side. 2 N-linked (GlcNAc...) asparagine glycosylation sites follow: Asn-197 and Asn-213.

The protein belongs to the DESIGUAL family.

Its subcellular location is the cell membrane. Together with MWL1, contributes to secondary cell wall biology, specifically lignin biosynthesis. The polypeptide is Protein MODIFYING WALL LIGNIN-2 (Arabidopsis thaliana (Mouse-ear cress)).